Reading from the N-terminus, the 894-residue chain is DNA mismatch repair protein MutS (894 aa).

Residue 632–639 (GPNMGGKS) participates in ATP binding.

This sequence belongs to the DNA mismatch repair MutS family.

Its function is as follows. This protein is involved in the repair of mismatches in DNA. It is possible that it carries out the mismatch recognition step. This protein has a weak ATPase activity. The sequence is that of DNA mismatch repair protein MutS from Paraburkholderia phytofirmans (strain DSM 17436 / LMG 22146 / PsJN) (Burkholderia phytofirmans).